Here is a 444-residue protein sequence, read N- to C-terminus: MNNLDNLAGNMSNLTIQGKGNETLISLDEYVNNILPSHLKKIFSDNLRENYQIPREFFESAELSGINNKIDQEIQKYSHLLKGLSNNGQTSFGSYLSNSNSFSGWSFIEGFIIGQFSVIIVLIFFIKFFVFSDGSSSNSSNPKPSLNSRSDRTSFSYKSNSMLSSNFFSSIMKRGGKTHYETDIDSGNTNRLNTILEKVYYDVDTHPSESLDWFNVLIAQTIQQFREEAWQRDNIVHSLNDFLHSKSSEMPSYLDDIKITELDIGDDFPIFSNCKIQYSPNSNKKKLEAKIYIDLNDRLAFGIETKLLVNYPKPRTAVLPVNLTVAIVRFQACLTVSLTNAEDFVPTTKETASSQDDDGYFLMFSFGPEYKMDFDIESLIGARSKLQNIPKISSVIEYHIKKWFVERCVEPRFQCIRLPSMWPRSKNTREEKVDTDDVPLSKAE.

Over 1–110 (MNNLDNLAGN…SFSGWSFIEG (110 aa)) the chain is Lumenal. A helical transmembrane segment spans residues 111–131 (FIIGQFSVIIVLIFFIKFFVF). Over 132-444 (SDGSSSNSSN…TDDVPLSKAE (313 aa)) the chain is Cytoplasmic. Residues 207 to 419 (PSESLDWFNV…EPRFQCIRLP (213 aa)) form the SMP-LTD domain.

It belongs to the MMM1 family. As to quaternary structure, homodimer. Component of the ER-mitochondria encounter structure (ERMES) or MDM complex, composed of MMM1, MDM10, MDM12 and MDM34. An MMM1 homodimer associates with one molecule of MDM12 on each side in a pairwise head-to-tail manner, and the SMP-LTD domains of MMM1 and MDM12 generate a continuous hydrophobic tunnel for phospholipid trafficking.

It is found in the endoplasmic reticulum membrane. In terms of biological role, component of the ERMES/MDM complex, which serves as a molecular tether to connect the endoplasmic reticulum (ER) and mitochondria. Components of this complex are involved in the control of mitochondrial shape and protein biogenesis, and function in nonvesicular lipid trafficking between the ER and mitochondria. The MDM12-MMM1 subcomplex functions in the major beta-barrel assembly pathway that is responsible for biogenesis of all outer membrane beta-barrel proteins, and acts in a late step after the SAM complex. The MDM10-MDM12-MMM1 subcomplex further acts in the TOM40-specific pathway after the action of the MDM12-MMM1 complex. Essential for establishing and maintaining the structure of mitochondria and maintenance of mtDNA nucleoids. The chain is Maintenance of mitochondrial morphology protein 1 from Vanderwaltozyma polyspora (strain ATCC 22028 / DSM 70294 / BCRC 21397 / CBS 2163 / NBRC 10782 / NRRL Y-8283 / UCD 57-17) (Kluyveromyces polysporus).